A 710-amino-acid polypeptide reads, in one-letter code: MKVLLRLPALLASLTLLQMAASTRNATRTATIRETVDEVKVQVNKAFLDSRDRLKTDMSNLAPTVRHLSGYLKQAKGRTRTAIRVGQVWEQSLKRLRRMVPLTNVTGQGLDLTSLSWEVGCGHPAPTVTCNISNPYRTITGDCNNRKNPELGSANRALARWLPAEYEDGLSLPFGWTPGKTRNGFPLPQPRDVSNQVLDYLNEEEILDQNRSLLFMQWGQIVDHDLDFAPETEMGSDNYSKAQCDELCIQGDNCFPIMFPKGDPKLKTQGKCLPFFRAGFVCPTSPYQSLAREQINALTSFMDASMVYGSEPSLANRLRNLSSPLGLMAVNEEVSDHGRPLLPFVNVKPSPCEVINRTAGVPCFLAGDSRASEQILLATSHTLFLREHNRLARELSRLNPQWDGEKLYQEARRIMGALIQIITFRDYLPILLGDELQKWIPPYQGYKETVDPRISNVFTFAFRFGHLEVPSTVSRLDENYQPWGSEPELPLHKLFFNTWRVVKDGGIDPLVRGLLAKKAKLAHQDKMMTGELRNMLFQPNHTVHGFDLAAINIQRCRDHGQPGYNSWRAFCGLSQPKTLEELSAVLRNEVLAKKLMDLYGTPDNIDIWLGAIAEPLVRRGRVGPLLTCLLGQQFQRIRDGDRFWWENPGVFTEKQRDSLQKMSFSRLVCDNTGINKVPLNPFQPNSYPHSFVDCSAIEKLDLTPWASVKK.

The first 22 residues, 1-22 (MKVLLRLPALLASLTLLQMAAS), serve as a signal peptide directing secretion. The propeptide occupies 23 to 98 (TRNATRTATI…WEQSLKRLRR (76 aa)). 3 N-linked (GlcNAc...) asparagine glycosylation sites follow: N25, N104, and N131. Cysteines 130 and 143 form a disulfide. D223 contributes to the heme b binding site. The active-site Proton acceptor is the H224. D225 lines the Ca(2+) pocket. N238 carries N-linked (GlcNAc...) asparagine glycosylation. Intrachain disulfides connect C244/C254 and C248/C272. Positions 299, 301, 303, and 305 each coordinate Ca(2+). At S313 the chain carries Phosphoserine. The N-linked (GlcNAc...) asparagine glycan is linked to N320. C352 and C363 form a disulfide bridge. Heme b is bound by residues E373 and H466. The residue at position 480 (Y480) is a 3'-nitrotyrosine. 2 disulfide bridges follow: C571–C628 and C669–C694.

Belongs to the peroxidase family. XPO subfamily. Requires Ca(2+) as cofactor. The cofactor is heme b. Expressed in the lacrimal gland with higher levels and 3-fold higher activity in adult females than males and secreted into tears (at protein level).

It localises to the secreted. The protein localises to the cytoplasm. The enzyme catalyses 2 a phenolic donor + H2O2 = 2 a phenolic radical donor + 2 H2O. It catalyses the reaction thiocyanate + H2O2 + H(+) = hypothiocyanous acid + H2O. The catalysed reaction is iodide + H2O2 = hypoiodite + H2O. Its function is as follows. Heme-containing oxidoreductase which catalyzes the conversion of thiocyanate (SCN(-)) into antimicrobial agent hypothiocyanous acid (OSCN(-)) in the presence of hydrogen peroxide (H2O2). Also involved in the conversion of iodide (I(-)) into hypoiodite (IO(-)) in the presence of H2O2. Responsible for the inactivation of a wide range of micro-organisms and hence, important component of defense mechanism. May be implicated in airway host defense against infection. May contribute to maintaining an appropriate H2O2 cellular level, therefore protecting cells from H2O2-caused injuries and inflammation. This is Lactoperoxidase (LPO) from Mesocricetus auratus (Golden hamster).